The following is a 1351-amino-acid chain: Serine-rich adhesin for platelets (1351 aa).

An N-terminal signal peptide occupies residues 1 to 89 (MSKRQKEFHD…VNMLHDQQAF (89 aa)). A serine-rich repeat region 1, SRR1 region spans residues 90–230 (AASDAPLTSE…KTSTTSTSTA (141 aa)). A compositionally biased stretch (polar residues) spans 100–111 (LNTQSETVGNQN). Disordered regions lie at residues 100–228 (LNTQ…TSTS) and 751–1323 (NSMS…GLLG). 2 stretches are compositionally biased toward low complexity: residues 112-133 (STTI…NSSS) and 149-228 (NVTS…TSTS). Positions 231–751 (PIKLRTFSRL…TTFKYEVTRN (521 aa)) are non-repeat region (NRR). Low complexity predominate over residues 752-1294 (SMSDSVSTSG…SQSTLSATSE (543 aa)). The segment at 752–1312 (SMSDSVSTSG…AQSEKRLPDT (561 aa)) is serine-rich repeat region 1, SRR1. The LPXTG sorting signal signature appears at 1309 to 1313 (LPDTG). T1312 carries the pentaglycyl murein peptidoglycan amidated threonine modification. Positions 1313 to 1351 (GDSIKQNGLLGGVMTLLVGLGLMKRKKKKDENDQDDSQA) are cleaved as a propeptide — removed by sortase.

This sequence belongs to the serine-rich repeat protein (SRRP) family. In terms of processing, proteolytically cleaved by a metalloprotease. Glycosylated. It is probable that most of the Ser residues in SSR1 and SSR2 are O-GlcNAcylated. Sequential glycosylation by sugar transferases are able to generate complex sugar polymorphisms.

The protein resides in the secreted. The protein localises to the cell wall. Its function is as follows. Mediates binding to human platelets, possibly through a receptor-ligand interaction. Probably associated with virulence in endovascular infection. The polypeptide is Serine-rich adhesin for platelets (sasA) (Staphylococcus aureus (strain MRSA252)).